We begin with the raw amino-acid sequence, 165 residues long: Putative protein FAM86C1P (165 aa).

Belongs to the class I-like SAM-binding methyltransferase superfamily. EEF2KMT family. As to quaternary structure, interacts with EEF2KMT.

In Homo sapiens (Human), this protein is Putative protein FAM86C1P.